A 547-amino-acid polypeptide reads, in one-letter code: MSSAKLGSASEDVNRRDANYHPTVWGDFFLTHSSNFLENNDSILEKHEELKQEVRNLLVVETSDLPSKIQLTDEIIRLGVGYHFETEIKAQLEKLHDHQLHLNFDLLTTSVWFRLLRGHGFSISSDVFKRFKNTKGEFETEDARTLWCLYEATHLRVDGEDILEEAIQFSRKKLEALLPELSFPLNECVRDALHIPYHRNVQRLAARQYIPQYDAEPTKIESLSLFAKIDFNMLQALHQRELREASRWWKEFDFPSKLPYARDRIAEGYYWMMGAHFEPKFSLSRKFLNRIIGITSLIDDTYDVYGTLEEVTLFTEAVERWDIEAVKDIPKYMQVIYTGMLGIFEDFKDNLINARGKDYCIDYAIEVFKEIVRSYQREAEYFHTGYVPSYDEYMENSIISGGYKMFIILMLIGRGEFELKETLDWASTIPEMVEASSLIARYIDDLQTYKAEEERGETVSAVRCYMREFGVSEEQACKKMREMIEIEWKRLNKTTLEADEISSSVVIPSLNFTRVLEVMYDKGDGYSDSQGVTKDRIAALLRHAIEI.

The Mg(2+) site is built by Asp299, Asp303, and Asp444. The DDXXD motif signature appears at 299–303 (DDTYD).

This sequence belongs to the terpene synthase family. The cofactor is Mg(2+).

The catalysed reaction is (2E,6E)-farnesyl diphosphate = delta-guaiene + diphosphate. It carries out the reaction (2E,6E)-farnesyl diphosphate = alpha-guaiene + diphosphate. It functions in the pathway secondary metabolite biosynthesis; terpenoid biosynthesis. Functionally, sesquiterpene synthase involved in the biosynthesis of delta-guaiene (81.2%) and alpha-guaiene (18.1%), two structures composed of five- and seven-membered rings. Also produces 0.7% of alpha-humulene. In Aquilaria crassna (Eagle wood), this protein is Delta-guaiene synthase 1 (C2).